The sequence spans 247 residues: Putative trypsin-6 (247 aa).

A signal peptide spans 1–15 (MNPLLILAFVGAAVA). Residues 24-244 (IVGGYTCEEN…YVDWIKDTIA (221 aa)) form the Peptidase S1 domain. A disulfide bridge connects residues Cys-48 and Cys-64. His-63 acts as the Charge relay system in catalysis. Ca(2+) contacts are provided by Glu-75, Asn-77, Val-80, and Glu-85. Residue Asp-107 is the Charge relay system of the active site. 3 disulfide bridges follow: Cys-139-Cys-206, Cys-171-Cys-185, and Cys-196-Cys-220. The active-site Charge relay system is the Ser-200.

Belongs to the peptidase S1 family. Tryptase subfamily. In terms of tissue distribution, overexpressed in metastasing in non small cell lung tumors, leading to an enhanced cell migration.

It is found in the secreted. The enzyme catalyses Preferential cleavage: Arg-|-Xaa, Lys-|-Xaa.. In terms of biological role, may regulate cell migration. The protein is Putative trypsin-6 (PRSS3P2) of Homo sapiens (Human).